Reading from the N-terminus, the 259-residue chain is Putative electron transfer flavoprotein subunit YgcR (259 aa).

This sequence belongs to the ETF beta-subunit/FixA family. YgcQ and YgcR form a heterodimer.

In terms of biological role, may play a role in a redox process. The chain is Putative electron transfer flavoprotein subunit YgcR (ygcR) from Escherichia coli (strain K12).